We begin with the raw amino-acid sequence, 460 residues long: Nucleosome assembly protein 1-like 2 (460 aa).

Basic and acidic residues-rich tracts occupy residues 1-11 (MAESENRKELS) and 27-36 (LGEHLERGED). Disordered stretches follow at residues 1–88 (MAES…ADRP) and 214–238 (EEEE…EDPK). Residues 214–236 (EEEEEEEEDDIEATGEENKEEED) show a composition bias toward acidic residues. The Nuclear localization signal motif lies at 346–352 (IKKKQKH).

The protein belongs to the nucleosome assembly protein (NAP) family.

The protein resides in the nucleus. Functionally, acidic protein which may be involved in interactions with other proteins or DNA. This Homo sapiens (Human) protein is Nucleosome assembly protein 1-like 2 (NAP1L2).